Here is a 64-residue protein sequence, read N- to C-terminus: Large ribosomal subunit protein bL35 (64 aa).

The span at 1 to 22 (MPKMKSHTGMGKRVRVTGKGKI) shows a compositional bias: basic residues. Residues 1–28 (MPKMKSHTGMGKRVRVTGKGKIVKQQAG) form a disordered region.

It belongs to the bacterial ribosomal protein bL35 family.

This chain is Large ribosomal subunit protein bL35, found in Salinispora tropica (strain ATCC BAA-916 / DSM 44818 / JCM 13857 / NBRC 105044 / CNB-440).